The primary structure comprises 159 residues: Ribosomal RNA large subunit methyltransferase H (159 aa).

S-adenosyl-L-methionine contacts are provided by residues L76, G108, and F127–L132.

Belongs to the RNA methyltransferase RlmH family. Homodimer.

Its subcellular location is the cytoplasm. The enzyme catalyses pseudouridine(1915) in 23S rRNA + S-adenosyl-L-methionine = N(3)-methylpseudouridine(1915) in 23S rRNA + S-adenosyl-L-homocysteine + H(+). In terms of biological role, specifically methylates the pseudouridine at position 1915 (m3Psi1915) in 23S rRNA. The chain is Ribosomal RNA large subunit methyltransferase H from Latilactobacillus sakei subsp. sakei (strain 23K) (Lactobacillus sakei subsp. sakei).